Here is a 21-residue protein sequence, read N- to C-terminus: Fibrinogen beta chain (21 aa).

Pyrrolidone carboxylic acid is present on Gln-1. Positions 1–11 are enriched in acidic residues; it reads QPSYDYDEEED. The tract at residues 1-21 is disordered; sequence QPSYDYDEEEDDRAKLRLDAR. The residue at position 6 (Tyr-6) is a Sulfotyrosine. Over residues 12 to 21 the composition is skewed to basic and acidic residues; sequence DRAKLRLDAR.

In terms of assembly, heterohexamer; disulfide linked. Contains 2 sets of 3 non-identical chains (alpha, beta and gamma). The 2 heterotrimers are in head to head conformation with the N-termini in a small central domain. In terms of processing, conversion of fibrinogen to fibrin is triggered by thrombin, which cleaves fibrinopeptides A and B from alpha and beta chains, and thus exposes the N-terminal polymerization sites responsible for the formation of the soft clot.

The protein localises to the secreted. Its function is as follows. Cleaved by the protease thrombin to yield monomers which, together with fibrinogen alpha (FGA) and fibrinogen gamma (FGG), polymerize to form an insoluble fibrin matrix. Fibrin has a major function in hemostasis as one of the primary components of blood clots. In addition, functions during the early stages of wound repair to stabilize the lesion and guide cell migration during re-epithelialization. Was originally thought to be essential for platelet aggregation, based on in vitro studies using anticoagulated blood. However subsequent studies have shown that it is not absolutely required for thrombus formation in vivo. Enhances expression of SELP in activated platelets. Maternal fibrinogen is essential for successful pregnancy. Fibrin deposition is also associated with infection, where it protects against IFNG-mediated hemorrhage. May also facilitate the antibacterial immune response via both innate and T-cell mediated pathways. The polypeptide is Fibrinogen beta chain (FGB) (Antilocapra americana (Pronghorn)).